Consider the following 655-residue polypeptide: MQSARMTPSVGRQLLRLGARSSRSAALQGQPRPTSAQRLYASEATQAVLEKPETLSSDASTREKPARAESKSFAVGMFKGQLTTDQVFPYPSVLNEGQTQFLKELVGPVARFFEEVNDPAKNDSLEKVEEDTLQGLKELGAFGLQVPSELGGLGLSNTQYARLAEIVGMHDLGVSVTLGAHQSIGFKGILLYGTKAQKEKYLPRVASGQALAAFCLTEPSSGSDVASIRSSAVPSPCGKYYTLNGSKIWISNGGLADIFTVFAKTPIKDAATGAVKEKITAFVVERSFGGVTHGLPEKKMGIKASNTSEVYFDGVKVPAENVLGEVGDGFKVAVNILNNGRFGMAATLAGTMKAIIAKAVDHATNRTQFGDKIHNFGVIQEKLARMAILQYVTESMAYMLSANMDQGFKDFQIEAAISKIFGSEAAWKVTDECIQIMGGMGFMKEPGVERVLRDIRIFRIFEGTNDILRLFVALQGCMDKGKELTGLGNALKNPLGNVGLLIGEASKQLRRRTGIGSGLSLSGIVHPELSRSGELAVQALEQFATVVEAKLMKHKKGIVNEQFLLQRLADGAIDLYAMVVVLSRASRSLSEGYPTAQHEKMLCDSWCIEAATRIRENMASLQSNPQQQELFRNFRSISKAMVENGGLVTSNPLRV.

A mitochondrion-targeting transit peptide spans 1–40 (MQSARMTPSVGRQLLRLGARSSRSAALQGQPRPTSAQRLY). Residues 1-70 (MQSARMTPSV…TREKPARAES (70 aa)) form a disordered region. Residues 21–37 (SSRSAALQGQPRPTSAQ) show a composition bias toward polar residues. The tract at residues 41 to 482 (ASEATQAVLE…ALQGCMDKGK (442 aa)) is catalytic. An N6-acetyllysine modification is found at K51. Basic and acidic residues predominate over residues 60-70 (STREKPARAES). N6-acetyllysine; alternate is present on residues K71 and K127. K71 and K127 each carry N6-succinyllysine; alternate. K195 carries the N6-succinyllysine modification. 214–223 (FCLTEPSSGS) serves as a coordination point for FAD. The residue at position 237 (C237) is an S-nitrosocysteine. K239 carries the N6-acetyllysine; alternate modification. K239 is modified (N6-succinyllysine; alternate). Residue 249–251 (WIS) coordinates FAD. At K268 the chain carries N6-succinyllysine. N6-acetyllysine; alternate is present on residues K276 and K278. 2 positions are modified to N6-succinyllysine; alternate: K276 and K278. K298 and K316 each carry N6-acetyllysine. An N6-acetyllysine; alternate modification is found at K331. K331 carries the N6-succinyllysine; alternate modification. Residue K372 is modified to N6-succinyllysine. Substrate is bound at residue 461-463 (FEG). The active-site Proton acceptor is the E462. 464–466 (TND) is a binding site for FAD. The residue at position 482 (K482) is an N6-acetyllysine; alternate. An N6-succinyllysine; alternate modification is found at K482. A membrane-anchoring region spans residues 483-516 (ELTGLGNALKNPLGNVGLLIGEASKQLRRRTGIG). Residues S517 and S522 each carry the phosphoserine modification. K550 carries the N6-acetyllysine modification. Position 556 is an N6-acetyllysine; alternate (K556). At K556 the chain carries N6-succinyllysine; alternate. Q562 is a binding site for FAD. Position 639 is an N6-succinyllysine (K639).

Belongs to the acyl-CoA dehydrogenase family. As to quaternary structure, homodimer. Homodimerizes after import into the mitochondrion. Requires FAD as cofactor. Post-translationally, S-nitrosylation at Cys-237 in liver improves catalytic efficiency. As to expression, widely expressed (at protein level).

The protein resides in the mitochondrion inner membrane. It catalyses the reaction a very-long-chain 2,3-saturated fatty acyl-CoA + oxidized [electron-transfer flavoprotein] + H(+) = a very-long-chain (2E)-enoyl-CoA + reduced [electron-transfer flavoprotein]. The enzyme catalyses dodecanoyl-CoA + oxidized [electron-transfer flavoprotein] + H(+) = (2E)-dodecenoyl-CoA + reduced [electron-transfer flavoprotein]. The catalysed reaction is tetradecanoyl-CoA + oxidized [electron-transfer flavoprotein] + H(+) = (2E)-tetradecenoyl-CoA + reduced [electron-transfer flavoprotein]. It carries out the reaction oxidized [electron-transfer flavoprotein] + hexadecanoyl-CoA + H(+) = (2E)-hexadecenoyl-CoA + reduced [electron-transfer flavoprotein]. It catalyses the reaction octadecanoyl-CoA + oxidized [electron-transfer flavoprotein] + H(+) = (2E)-octadecenoyl-CoA + reduced [electron-transfer flavoprotein]. The enzyme catalyses eicosanoyl-CoA + oxidized [electron-transfer flavoprotein] + H(+) = (2E)-eicosenoyl-CoA + reduced [electron-transfer flavoprotein]. The catalysed reaction is docosanoyl-CoA + oxidized [electron-transfer flavoprotein] + H(+) = (2E)-docosenoyl-CoA + reduced [electron-transfer flavoprotein]. It carries out the reaction tetracosanoyl-CoA + oxidized [electron-transfer flavoprotein] + H(+) = (2E)-tetracosenoyl-CoA + reduced [electron-transfer flavoprotein]. It participates in lipid metabolism; mitochondrial fatty acid beta-oxidation. Functionally, very long-chain specific acyl-CoA dehydrogenase is one of the acyl-CoA dehydrogenases that catalyze the first step of mitochondrial fatty acid beta-oxidation, an aerobic process breaking down fatty acids into acetyl-CoA and allowing the production of energy from fats. The first step of fatty acid beta-oxidation consists in the removal of one hydrogen from C-2 and C-3 of the straight-chain fatty acyl-CoA thioester, resulting in the formation of trans-2-enoyl-CoA. Among the different mitochondrial acyl-CoA dehydrogenases, very long-chain specific acyl-CoA dehydrogenase acts specifically on acyl-CoAs with saturated 12 to 24 carbons long primary chains. In Rattus norvegicus (Rat), this protein is Very long-chain specific acyl-CoA dehydrogenase, mitochondrial.